Consider the following 185-residue polypeptide: Photosystem I assembly protein Ycf4 (185 aa).

2 consecutive transmembrane segments (helical) span residues 24–44 (YIIG…SISS) and 66–86 (IIMG…WYMV).

Belongs to the Ycf4 family.

It is found in the cellular thylakoid membrane. Its function is as follows. Seems to be required for the assembly of the photosystem I complex. The chain is Photosystem I assembly protein Ycf4 from Prochlorococcus marinus (strain MIT 9312).